A 779-amino-acid polypeptide reads, in one-letter code: Acyl-CoA dehydrogenase family member 11 (779 aa).

Residue Lys-175 is modified to N6-acetyllysine. A Phosphoserine modification is found at Ser-210. Phosphotyrosine is present on Tyr-323. N6-succinyllysine occurs at positions 368 and 390. Residues 503–513, 511–513, 537–539, and Ser-539 each bind FAD; these read FCMTEPNVSSS, SSS, and WSS. Ser-513 contacts substrate. 628–631 contacts substrate; sequence GPGR. Residues Arg-656, Gln-726, and 726–730 each bind FAD; that span reads QVHGG. Gly-754 provides a ligand contact to substrate. FAD contacts are provided by residues 755-757 and Glu-757; that span reads PDE. Lys-765 is modified (N6-acetyllysine).

Belongs to the acyl-CoA dehydrogenase family. Homodimer. FAD serves as cofactor.

It localises to the peroxisome. It is found in the mitochondrion membrane. The catalysed reaction is a 2,3-saturated acyl-CoA + oxidized [electron-transfer flavoprotein] + H(+) = a (2E)-enoyl-CoA + reduced [electron-transfer flavoprotein]. It catalyses the reaction docosanoyl-CoA + oxidized [electron-transfer flavoprotein] + H(+) = (2E)-docosenoyl-CoA + reduced [electron-transfer flavoprotein]. It carries out the reaction tetracosanoyl-CoA + oxidized [electron-transfer flavoprotein] + H(+) = (2E)-tetracosenoyl-CoA + reduced [electron-transfer flavoprotein]. The enzyme catalyses eicosanoyl-CoA + oxidized [electron-transfer flavoprotein] + H(+) = (2E)-eicosenoyl-CoA + reduced [electron-transfer flavoprotein]. The catalysed reaction is hexacosanoyl-CoA + oxidized [electron-transfer flavoprotein] + H(+) = (2E)-hexacosenoyl-CoA + reduced [electron-transfer flavoprotein]. It catalyses the reaction tricosanoyl-CoA + oxidized [electron-transfer flavoprotein] + H(+) = (2E)-tricosenoyl-CoA + reduced [electron-transfer flavoprotein]. The protein operates within lipid metabolism; fatty acid beta-oxidation. Its function is as follows. Acyl-CoA dehydrogenase, that exhibits maximal activity towards saturated C22-CoA. Probably participates in beta-oxydation and energy production but could also play a role in the metabolism of specific fatty acids to control fatty acids composition of cellular lipids in brain. The chain is Acyl-CoA dehydrogenase family member 11 (Acad11) from Rattus norvegicus (Rat).